We begin with the raw amino-acid sequence, 362 residues long: ATPase ARSA2 (362 aa).

Residue 27 to 34 (KGGVGKTT) coordinates ATP. Residue aspartate 58 is part of the active site. 2 residues coordinate ATP: glutamate 235 and asparagine 262.

This sequence belongs to the arsA ATPase family. Homodimer. Interacts with SEC61B.

The protein resides in the cytoplasm. It localises to the cytosol. Its subcellular location is the endoplasmic reticulum. Its function is as follows. ATPase required for the post-translational delivery of tail-anchored (TA) proteins to the endoplasmic reticulum. Recognizes and selectively binds the transmembrane domain of TA proteins in the cytosol. This complex then targets to the endoplasmic reticulum by membrane-bound receptors, where the tail-anchored protein is released for insertion. This process is regulated by ATP binding and hydrolysis. ATP binding drives the homodimer towards the closed dimer state, facilitating recognition of newly synthesized TA membrane proteins. ATP hydrolysis is required for insertion. Subsequently, the homodimer reverts towards the open dimer state, lowering its affinity for the membrane-bound receptor, and returning it to the cytosol to initiate a new round of targeting. The protein is ATPase ARSA2 of Chlamydomonas reinhardtii (Chlamydomonas smithii).